The following is a 967-amino-acid chain: Aminopeptidase N (967 aa).

At 2-8 (AKGFYIS) the chain is on the cytoplasmic side. The chain crosses the membrane as a helical; Signal-anchor for type II membrane protein span at residues 9-32 (KSLGILGILLGVAAVCTIIALSVV). The cytosolic Ser/Thr-rich junction stretch occupies residues 33-68 (YSQEKNKNANSSPVASTTPSASATTNPASATTLDQS). The Extracellular portion of the chain corresponds to 33–967 (YSQEKNKNAN…VLQWFTENSK (935 aa)). Positions 40-62 (NANSSPVASTTPSASATTNPASA) are disordered. A compositionally biased stretch (low complexity) spans 41-62 (ANSSPVASTTPSASATTNPASA). A metalloprotease region spans residues 69 to 967 (KAWNRYRLPN…VLQWFTENSK (899 aa)). Asn128 carries N-linked (GlcNAc...) asparagine glycosylation. Tyr176 carries the sulfotyrosine modification. N-linked (GlcNAc...) asparagine glycans are attached at residues Asn234 and Asn265. The interval 288–295 (DYVEKQAS) is necessary and sufficient to mediate interaction with HCoV-229E. A glycan (N-linked (GlcNAc...) asparagine) is linked at Asn319. Residue 352-356 (GAMEN) participates in substrate binding. Position 388 (His388) interacts with Zn(2+). The active-site Proton acceptor is Glu389. Residues His392 and Glu411 each contribute to the Zn(2+) site. Sulfotyrosine is present on residues Tyr419 and Tyr424. 5 N-linked (GlcNAc...) asparagine glycosylation sites follow: Asn527, Asn573, Asn625, Asn681, and Asn735. Disulfide bonds link Cys761–Cys768 and Cys798–Cys834. Asn818 is a glycosylation site (N-linked (GlcNAc...) asparagine). Residue Tyr913 is modified to Sulfotyrosine.

Belongs to the peptidase M1 family. Homodimer. Interacts with SLC6A19. As to quaternary structure, (Microbial infection) Interacts with the S1 domain of human coronavirus 229E/HCoV-229E spike protein. The cofactor is Zn(2+). In terms of processing, sulfated. N- and O-glycosylated. Post-translationally, may undergo proteolysis and give rise to a soluble form. As to expression, expressed in epithelial cells of the kidney, intestine, and respiratory tract; granulocytes, monocytes, fibroblasts, endothelial cells, cerebral pericytes at the blood-brain barrier, synaptic membranes of cells in the CNS. Also expressed in endometrial stromal cells, but not in the endometrial glandular cells. Found in the vasculature of tissues that undergo angiogenesis and in malignant gliomas and lymph node metastases from multiple tumor types but not in blood vessels of normal tissues. A soluble form has been found in plasma. It is found to be elevated in plasma and effusions of cancer patients.

The protein localises to the cell membrane. The enzyme catalyses Release of an N-terminal amino acid, Xaa-|-Yaa- from a peptide, amide or arylamide. Xaa is preferably Ala, but may be most amino acids including Pro (slow action). When a terminal hydrophobic residue is followed by a prolyl residue, the two may be released as an intact Xaa-Pro dipeptide.. Functionally, broad specificity aminopeptidase which plays a role in the final digestion of peptides generated from hydrolysis of proteins by gastric and pancreatic proteases. Also involved in the processing of various peptides including peptide hormones, such as angiotensin III and IV, neuropeptides, and chemokines. May also be involved the cleavage of peptides bound to major histocompatibility complex class II molecules of antigen presenting cells. May have a role in angiogenesis and promote cholesterol crystallization. May have a role in amino acid transport by acting as binding partner of amino acid transporter SLC6A19 and regulating its activity. (Microbial infection) Acts as a receptor for human coronavirus 229E/HCoV-229E. In case of human coronavirus 229E (HCoV-229E) infection, serves as receptor for HCoV-229E spike glycoprotein. Its function is as follows. (Microbial infection) Mediates as well Human cytomegalovirus (HCMV) infection. The chain is Aminopeptidase N (ANPEP) from Homo sapiens (Human).